A 965-amino-acid polypeptide reads, in one-letter code: MTSKTIVNSLAELEQTQDFIRRHIGPSESETQAMLNDLGVESVDALIDEIVPSDIRLADLPNVEESKTEVQALADLKAVASLNKVNDTYIGLGYFGTLTPNVILRNVLENPGWYTAYTPYQPEIAQGRLESLLNYQQMCIDLTGLELASASLLDEGTAAAEAMALAKRVSKNKKSNLFFISDDVYPQTIDVVKQRAEMFGFDIVVAPAADAAEHDIFGALIQYPGASGQVTDVSELIAKIHDNKGIVAVAADIMSLVLLKSPGELGADAVIGSSQRFGVPMGYGGPHAAFFTTLDKYKRSLPGRIIGVSKDTRGKNALRMAMQTREQHIRREKANSNVCTAQVLLANMAAFYAVYHGPQGLKTIANRIHRLADILCLGTATKGLTAVHANYFDTLTFNVDNKDEIVARALAANANFRTDVDGQISIALDETTTRENVAQLFDILLGEGHGLNVSDLDDQIVASGHSSIPASLVRESAILTHPVFNSYHSETEMLRYIKRLENKDLALNHSMISLGSCTMKLNATAQMIPVSWPEFANMHPFAPVNQAQGYKAMIDELAKWLVELTGYDKMSMQPNSGAQGEYAGLIAISKYHESRGDSHRNICLIPASAHGTNPASAMMVDMKIVIVACDKEGNVDMADLKAKAEELADNLACIMITYPSTHGVYETTIAEICNIIHDNGGQVYLDGANMNAQVGLTSPGFIGADVSHLNLHKTFAIPHGGGGPGMGPIGVKSHLAPFLPDHALINVDEATKGNGAVSSAPFGSASILPITYLYIALLGKKGVTDATKYAITNANYVSKKLSEHYPILYSGKNGRVAHECIVDLRPLKASSGVTEVDMAKRLMDYGFHSPTMSFPVAGTFMIEPTESESKVELDRFIEAMVCIRDEVRKVESGEWASDNNPLHNAPHTLADITEPWDRPYSIQEAVFPVVAVTANKFWPTVNRIDDVFGDRNLICSCPPIESYID.

N6-(pyridoxal phosphate)lysine is present on lysine 713.

This sequence belongs to the GcvP family. The glycine cleavage system is composed of four proteins: P, T, L and H. Requires pyridoxal 5'-phosphate as cofactor.

It catalyses the reaction N(6)-[(R)-lipoyl]-L-lysyl-[glycine-cleavage complex H protein] + glycine + H(+) = N(6)-[(R)-S(8)-aminomethyldihydrolipoyl]-L-lysyl-[glycine-cleavage complex H protein] + CO2. Functionally, the glycine cleavage system catalyzes the degradation of glycine. The P protein binds the alpha-amino group of glycine through its pyridoxal phosphate cofactor; CO(2) is released and the remaining methylamine moiety is then transferred to the lipoamide cofactor of the H protein. This is Glycine dehydrogenase (decarboxylating) 1 from Colwellia psychrerythraea (strain 34H / ATCC BAA-681) (Vibrio psychroerythus).